A 289-amino-acid polypeptide reads, in one-letter code: MPELPEVEVVRRGLQSHAVGAAIEAVEVLHPRAIRRHILGSEDLIGQLTGQTIASAERRGKYLWLVLEPAGVGLVVHLGMSGQMLVQPPTVDWEKHLRIRLALDSGADLRFVDQRTFGGWSISPLVEVDGTMLPESVAHIARDPMDAAFDLESVVKVLRGKHTEIKRAILDQTVVSGIGNIYADESLWRAKIHGNRIAESLTRPKLRELLTAAHSVMGEALDQGGTSFDALYVNVNGESGYFDRSLSAYGQENLPCPRCGAPIKREKFMNRSSFSCPRCQPTPRARRIA.

Proline 2 acts as the Schiff-base intermediate with DNA in catalysis. Catalysis depends on glutamate 3, which acts as the Proton donor. Lysine 61 functions as the Proton donor; for beta-elimination activity in the catalytic mechanism. The DNA site is built by histidine 96, arginine 115, and lysine 161. The FPG-type zinc finger occupies 247–281; that stretch reads SAYGQENLPCPRCGAPIKREKFMNRSSFSCPRCQP. Arginine 271 serves as the catalytic Proton donor; for delta-elimination activity.

This sequence belongs to the FPG family. As to quaternary structure, monomer. It depends on Zn(2+) as a cofactor.

It carries out the reaction Hydrolysis of DNA containing ring-opened 7-methylguanine residues, releasing 2,6-diamino-4-hydroxy-5-(N-methyl)formamidopyrimidine.. The catalysed reaction is 2'-deoxyribonucleotide-(2'-deoxyribose 5'-phosphate)-2'-deoxyribonucleotide-DNA = a 3'-end 2'-deoxyribonucleotide-(2,3-dehydro-2,3-deoxyribose 5'-phosphate)-DNA + a 5'-end 5'-phospho-2'-deoxyribonucleoside-DNA + H(+). Involved in base excision repair of DNA damaged by oxidation or by mutagenic agents. Acts as a DNA glycosylase that recognizes and removes damaged bases. Has a preference for oxidized purines, such as 7,8-dihydro-8-oxoguanine (8-oxoG). Has AP (apurinic/apyrimidinic) lyase activity and introduces nicks in the DNA strand. Cleaves the DNA backbone by beta-delta elimination to generate a single-strand break at the site of the removed base with both 3'- and 5'-phosphates. The protein is Formamidopyrimidine-DNA glycosylase of Rhodococcus erythropolis (strain PR4 / NBRC 100887).